Reading from the N-terminus, the 128-residue chain is 3-aminoacrylate deaminase RutC (128 aa).

The protein belongs to the RutC family.

It carries out the reaction (Z)-3-aminoacrylate + H2O + H(+) = 3-oxopropanoate + NH4(+). In terms of biological role, involved in pyrimidine catabolism. Catalyzes the deamination of 3-aminoacrylate to malonic semialdehyde, a reaction that can also occur spontaneously. RutC may facilitate the reaction and modulate the metabolic fitness, rather than catalyzing essential functions. The protein is 3-aminoacrylate deaminase RutC of Enterobacter cloacae subsp. cloacae (strain ATCC 13047 / DSM 30054 / NBRC 13535 / NCTC 10005 / WDCM 00083 / NCDC 279-56).